Reading from the N-terminus, the 509-residue chain is ATP synthase subunit alpha (509 aa).

169 to 176 (GDRQTGKT) serves as a coordination point for ATP.

This sequence belongs to the ATPase alpha/beta chains family. In terms of assembly, F-type ATPases have 2 components, CF(1) - the catalytic core - and CF(0) - the membrane proton channel. CF(1) has five subunits: alpha(3), beta(3), gamma(1), delta(1), epsilon(1). CF(0) has three main subunits: a(1), b(2) and c(9-12). The alpha and beta chains form an alternating ring which encloses part of the gamma chain. CF(1) is attached to CF(0) by a central stalk formed by the gamma and epsilon chains, while a peripheral stalk is formed by the delta and b chains.

Its subcellular location is the cell inner membrane. The enzyme catalyses ATP + H2O + 4 H(+)(in) = ADP + phosphate + 5 H(+)(out). Produces ATP from ADP in the presence of a proton gradient across the membrane. The alpha chain is a regulatory subunit. This Methylorubrum extorquens (strain CM4 / NCIMB 13688) (Methylobacterium extorquens) protein is ATP synthase subunit alpha.